Consider the following 179-residue polypeptide: Large ribosomal subunit protein uL6 (179 aa).

Belongs to the universal ribosomal protein uL6 family. As to quaternary structure, part of the 50S ribosomal subunit.

Its function is as follows. This protein binds to the 23S rRNA, and is important in its secondary structure. It is located near the subunit interface in the base of the L7/L12 stalk, and near the tRNA binding site of the peptidyltransferase center. The chain is Large ribosomal subunit protein uL6 from Chlorobium phaeobacteroides (strain BS1).